Here is a 511-residue protein sequence, read N- to C-terminus: Chromosomal replication initiator protein DnaA (511 aa).

The domain I, interacts with DnaA modulators stretch occupies residues 1–87; sequence MSVELWQQCV…IGSKRSSAPR (87 aa). Residues 87 to 174 form a domain II region; sequence RAAPNAPLAA…QVEGALKHTS (88 aa). The disordered stretch occupies residues 133–160; sequence VATHDEPSRDSFDPMAGASSQQAPARAE. Residues 134 to 144 show a composition bias toward basic and acidic residues; it reads ATHDEPSRDSF. The domain III, AAA+ region stretch occupies residues 175–391; the sequence is YLNRTFTFEN…GALKRVIAHS (217 aa). Residues Gly219, Gly221, Lys222, and Thr223 each coordinate ATP. Residues 392-511 form a domain IV, binds dsDNA region; it reads HFMGRDITIE…YKNLLRTLTT (120 aa).

Belongs to the DnaA family. Oligomerizes as a right-handed, spiral filament on DNA at oriC.

Its subcellular location is the cytoplasm. Its function is as follows. Plays an essential role in the initiation and regulation of chromosomal replication. ATP-DnaA binds to the origin of replication (oriC) to initiate formation of the DNA replication initiation complex once per cell cycle. Binds the DnaA box (a 9 base pair repeat at the origin) and separates the double-stranded (ds)DNA. Forms a right-handed helical filament on oriC DNA; dsDNA binds to the exterior of the filament while single-stranded (ss)DNA is stabiized in the filament's interior. The ATP-DnaA-oriC complex binds and stabilizes one strand of the AT-rich DNA unwinding element (DUE), permitting loading of DNA polymerase. After initiation quickly degrades to an ADP-DnaA complex that is not apt for DNA replication. Binds acidic phospholipids. The sequence is that of Chromosomal replication initiator protein DnaA from Pseudomonas syringae pv. tomato (strain ATCC BAA-871 / DC3000).